The sequence spans 336 residues: 3-isopropylmalate dehydrogenase (336 aa).

Residues Arg-87, Arg-97, Arg-121, and Asp-211 each contribute to the substrate site. Mg(2+) contacts are provided by Asp-211, Asp-235, and Asp-239. 271 to 283 (GSAPDIAGQGIAD) is a binding site for NAD(+).

The protein belongs to the isocitrate and isopropylmalate dehydrogenases family. LeuB type 2 subfamily. In terms of assembly, homodimer. The cofactor is Mg(2+). Requires Mn(2+) as cofactor.

It localises to the cytoplasm. The catalysed reaction is (2R,3S)-3-isopropylmalate + NAD(+) = 4-methyl-2-oxopentanoate + CO2 + NADH. It participates in amino-acid biosynthesis; L-leucine biosynthesis; L-leucine from 3-methyl-2-oxobutanoate: step 3/4. In terms of biological role, catalyzes the oxidation of 3-carboxy-2-hydroxy-4-methylpentanoate (3-isopropylmalate) to 3-carboxy-4-methyl-2-oxopentanoate. The product decarboxylates to 4-methyl-2 oxopentanoate. This Mycobacterium sp. (strain JLS) protein is 3-isopropylmalate dehydrogenase.